A 237-amino-acid chain; its full sequence is DNA repair protein RecO (237 aa).

The protein belongs to the RecO family.

Involved in DNA repair and RecF pathway recombination. The chain is DNA repair protein RecO from Rickettsia felis (strain ATCC VR-1525 / URRWXCal2) (Rickettsia azadi).